Here is an 81-residue protein sequence, read N- to C-terminus: Defensin-like protein 144 (81 aa).

The N-terminal stretch at 1–24 (MKNSFRFSFTVITTFIICVLVSGA) is a signal peptide. 4 disulfide bridges follow: Cys-30/Cys-74, Cys-42/Cys-61, Cys-47/Cys-69, and Cys-51/Cys-71.

The protein belongs to the DEFL family.

The protein resides in the secreted. The chain is Defensin-like protein 144 (LCR10) from Arabidopsis thaliana (Mouse-ear cress).